Here is a 227-residue protein sequence, read N- to C-terminus: Ribonuclease 3 (227 aa).

In terms of domain architecture, RNase III spans 4 to 126; the sequence is LDRLERKIGY…IIGAMSLDQG (123 aa). E39 is a binding site for Mg(2+). The active site involves D43. Residues D112 and E115 each contribute to the Mg(2+) site. E115 is an active-site residue. Residues 153–226 form the DRBM domain; it reads DAKTRLQEYL…AEQILKELDI (74 aa).

It belongs to the ribonuclease III family. In terms of assembly, homodimer. Mg(2+) is required as a cofactor.

Its subcellular location is the cytoplasm. The catalysed reaction is Endonucleolytic cleavage to 5'-phosphomonoester.. Functionally, digests double-stranded RNA. Involved in the processing of primary rRNA transcript to yield the immediate precursors to the large and small rRNAs (23S and 16S). Processes some mRNAs, and tRNAs when they are encoded in the rRNA operon. Processes pre-crRNA and tracrRNA of type II CRISPR loci if present in the organism. The polypeptide is Ribonuclease 3 (Haemophilus influenzae (strain PittGG)).